The chain runs to 396 residues: Tryptophan synthase beta chain (396 aa).

N6-(pyridoxal phosphate)lysine is present on K86.

This sequence belongs to the TrpB family. As to quaternary structure, tetramer of two alpha and two beta chains. Pyridoxal 5'-phosphate is required as a cofactor.

It catalyses the reaction (1S,2R)-1-C-(indol-3-yl)glycerol 3-phosphate + L-serine = D-glyceraldehyde 3-phosphate + L-tryptophan + H2O. Its pathway is amino-acid biosynthesis; L-tryptophan biosynthesis; L-tryptophan from chorismate: step 5/5. The beta subunit is responsible for the synthesis of L-tryptophan from indole and L-serine. In Erwinia tasmaniensis (strain DSM 17950 / CFBP 7177 / CIP 109463 / NCPPB 4357 / Et1/99), this protein is Tryptophan synthase beta chain.